Reading from the N-terminus, the 497-residue chain is Aspartyl/glutamyl-tRNA(Asn/Gln) amidotransferase subunit B (497 aa).

This sequence belongs to the GatB/GatE family. GatB subfamily. As to quaternary structure, heterotrimer of A, B and C subunits.

It carries out the reaction L-glutamyl-tRNA(Gln) + L-glutamine + ATP + H2O = L-glutaminyl-tRNA(Gln) + L-glutamate + ADP + phosphate + H(+). The catalysed reaction is L-aspartyl-tRNA(Asn) + L-glutamine + ATP + H2O = L-asparaginyl-tRNA(Asn) + L-glutamate + ADP + phosphate + 2 H(+). In terms of biological role, allows the formation of correctly charged Asn-tRNA(Asn) or Gln-tRNA(Gln) through the transamidation of misacylated Asp-tRNA(Asn) or Glu-tRNA(Gln) in organisms which lack either or both of asparaginyl-tRNA or glutaminyl-tRNA synthetases. The reaction takes place in the presence of glutamine and ATP through an activated phospho-Asp-tRNA(Asn) or phospho-Glu-tRNA(Gln). This is Aspartyl/glutamyl-tRNA(Asn/Gln) amidotransferase subunit B from Novosphingobium aromaticivorans (strain ATCC 700278 / DSM 12444 / CCUG 56034 / CIP 105152 / NBRC 16084 / F199).